Consider the following 320-residue polypeptide: Nuclease (320 aa).

Residue His-155 is the Proton acceptor of the active site. Asn-187 contacts Mg(2+). Residue Asn-204 is glycosylated (N-linked (GlcNAc...) asparagine). Cys-312 and Cys-317 are oxidised to a cystine.

Belongs to the DNA/RNA non-specific endonuclease family. In terms of assembly, homodimer; as a result of non-covalent interactions and not through the disulfide linkages between the two monomers. Requires Mg(2+) as cofactor. Mn(2+) is required as a cofactor. Post-translationally, glycosylated.

Its subcellular location is the secreted. In terms of biological role, this enzyme has both RNase and DNase activity. The polypeptide is Nuclease (Syncephalastrum racemosum (Filamentous fungus)).